Here is a 298-residue protein sequence, read N- to C-terminus: Phosphatidylserine decarboxylase proenzyme (298 aa).

Active-site charge relay system; for autoendoproteolytic cleavage activity residues include Asp113, His169, and Ser256. Ser256 (schiff-base intermediate with substrate; via pyruvic acid; for decarboxylase activity) is an active-site residue. Ser256 carries the pyruvic acid (Ser); by autocatalysis modification.

It belongs to the phosphatidylserine decarboxylase family. PSD-B subfamily. Prokaryotic type II sub-subfamily. Heterodimer of a large membrane-associated beta subunit and a small pyruvoyl-containing alpha subunit. Pyruvate is required as a cofactor. Post-translationally, is synthesized initially as an inactive proenzyme. Formation of the active enzyme involves a self-maturation process in which the active site pyruvoyl group is generated from an internal serine residue via an autocatalytic post-translational modification. Two non-identical subunits are generated from the proenzyme in this reaction, and the pyruvate is formed at the N-terminus of the alpha chain, which is derived from the carboxyl end of the proenzyme. The autoendoproteolytic cleavage occurs by a canonical serine protease mechanism, in which the side chain hydroxyl group of the serine supplies its oxygen atom to form the C-terminus of the beta chain, while the remainder of the serine residue undergoes an oxidative deamination to produce ammonia and the pyruvoyl prosthetic group on the alpha chain. During this reaction, the Ser that is part of the protease active site of the proenzyme becomes the pyruvoyl prosthetic group, which constitutes an essential element of the active site of the mature decarboxylase.

The protein localises to the cell membrane. The enzyme catalyses a 1,2-diacyl-sn-glycero-3-phospho-L-serine + H(+) = a 1,2-diacyl-sn-glycero-3-phosphoethanolamine + CO2. Its pathway is phospholipid metabolism; phosphatidylethanolamine biosynthesis; phosphatidylethanolamine from CDP-diacylglycerol: step 2/2. Functionally, catalyzes the formation of phosphatidylethanolamine (PtdEtn) from phosphatidylserine (PtdSer). The polypeptide is Phosphatidylserine decarboxylase proenzyme (Desulfitobacterium hafniense (strain Y51)).